Consider the following 762-residue polypeptide: N,N-dimethylformamidase beta subunit (762 aa).

As to quaternary structure, heterotetramer of two DmfA1 (alpha) and two DmfA2 (beta) subunits.

The catalysed reaction is N,N-dimethylformamide + H2O = dimethylamine + formate. Hydrolyzes N,N-dimethylformamide, and to a lesser extent N,N-dimethylacetamide and N,N-diethylacetamide. Has no activity against the substituted amides N-methylformamide, N-ethylformamide, N-ethylformamide and N-methylacetamide or the unsubstituted amides formamide, nicotinamide, acetoamide, benzamide, acetamide and acrylamide. The polypeptide is N,N-dimethylformamidase beta subunit (Paracoccus aminophilus).